Consider the following 365-residue polypeptide: Mitogen-activated protein kinase 13 (365 aa).

A Protein kinase domain is found at 25–308; it reads YVSPTHVGSG…AAQALTHPFF (284 aa). 31 to 39 contributes to the ATP binding site; the sequence is VGSGAYGSV. At Ser47 the chain carries Phosphoserine. Lys54 serves as a coordination point for ATP. Asp150 (proton acceptor) is an active-site residue. Residue Thr180 is modified to Phosphothreonine; by MAP2K3, MAP2K4, MAP2K6 and MAP2K7. The TXY signature appears at 180-182; the sequence is TGY. Phosphotyrosine; by MAP2K3, MAP2K4, MAP2K6 and MAP2K7 is present on Tyr182. The residue at position 350 (Ser350) is a Phosphoserine.

Belongs to the protein kinase superfamily. CMGC Ser/Thr protein kinase family. MAP kinase subfamily. In terms of assembly, interacts with MAPK8IP2. Mg(2+) serves as cofactor. Post-translationally, dually phosphorylated on Thr-180 and Tyr-182 by MAP2K3/MKK3, MAP2K4/MKK4, MAP2K6/MKK6 and MAP2K7/MKK7, which activates the enzyme. Dephosphorylated by dual specificity phosphatase DUSP1.

The enzyme catalyses L-seryl-[protein] + ATP = O-phospho-L-seryl-[protein] + ADP + H(+). It carries out the reaction L-threonyl-[protein] + ATP = O-phospho-L-threonyl-[protein] + ADP + H(+). Its activity is regulated as follows. Activated by phosphorylation on threonine and tyrosine by dual specificity kinases, MAP2K3/MKK3, MAP2K6/MKK6, MAP2K4/MKK4 and MAP2K7/MKK7. Activation by ultraviolet radiation, hyperosmotic shock, anisomycin or by TNF-alpha is mediated by MAP2K3/MKK3. Inhibited by dual specificity phosphatase DUSP1. Its function is as follows. Serine/threonine kinase which acts as an essential component of the MAP kinase signal transduction pathway. MAPK13 is one of the four p38 MAPKs which play an important role in the cascades of cellular responses evoked by extracellular stimuli such as pro-inflammatory cytokines or physical stress leading to direct activation of transcription factors such as ELK1 and ATF2. Accordingly, p38 MAPKs phosphorylate a broad range of proteins and it has been estimated that they may have approximately 200 to 300 substrates each. MAPK13 is one of the less studied p38 MAPK isoforms. Some of the targets are downstream kinases such as MAPKAPK2, which are activated through phosphorylation and further phosphorylate additional targets. Plays a role in the regulation of protein translation by phosphorylating and inactivating EEF2K. Involved in cytoskeletal remodeling through phosphorylation of MAPT and STMN1. Mediates UV irradiation induced up-regulation of the gene expression of CXCL14. Plays an important role in the regulation of epidermal keratinocyte differentiation, apoptosis and skin tumor development. Phosphorylates the transcriptional activator MYB in response to stress which leads to rapid MYB degradation via a proteasome-dependent pathway. MAPK13 also phosphorylates and down-regulates PRKD1 during regulation of insulin secretion in pancreatic beta cells. This Pan troglodytes (Chimpanzee) protein is Mitogen-activated protein kinase 13 (MAPK13).